The chain runs to 86 residues: Anti-adapter protein IraP (86 aa).

The stretch at 1–36 (MKNLIAELLLKLAQKEEESKELCAQVEALEIIVTAM) forms a coiled coil.

This sequence belongs to the IraP family. Interacts with RssB.

The protein localises to the cytoplasm. In terms of biological role, inhibits RpoS proteolysis by regulating RssB activity, thereby increasing the stability of the sigma stress factor RpoS especially during phosphate starvation, but also in stationary phase and during nitrogen starvation. Its effect on RpoS stability is due to its interaction with RssB, which probably blocks the interaction of RssB with RpoS, and the consequent delivery of the RssB-RpoS complex to the ClpXP protein degradation pathway. The chain is Anti-adapter protein IraP from Shigella boydii serotype 4 (strain Sb227).